The chain runs to 207 residues: Large ribosomal subunit protein uL4 (207 aa).

A disordered region spans residues histidine 49 to isoleucine 78.

This sequence belongs to the universal ribosomal protein uL4 family. As to quaternary structure, part of the 50S ribosomal subunit.

One of the primary rRNA binding proteins, this protein initially binds near the 5'-end of the 23S rRNA. It is important during the early stages of 50S assembly. It makes multiple contacts with different domains of the 23S rRNA in the assembled 50S subunit and ribosome. Functionally, forms part of the polypeptide exit tunnel. This is Large ribosomal subunit protein uL4 from Streptococcus suis (strain 98HAH33).